Here is a 467-residue protein sequence, read N- to C-terminus: Protein CitXG (467 aa).

The tract at residues 1–178 (MDYFEGGERL…NKMLHNFEKS (178 aa)) is apo-citrate lyase phosphoribosyl-dephospho-CoA transferase. Positions 179-467 (KMIVPQMTQS…IFLARLVGSL (289 aa)) are 2-(5''-triphosphoribosyl)-3'-dephosphocoenzyme-A synthase.

This sequence in the N-terminal section; belongs to the CitX family. In the C-terminal section; belongs to the CitG/MdcB family.

The enzyme catalyses apo-[citrate lyase ACP] + 2'-(5''-triphospho-alpha-D-ribosyl)-3'-dephospho-CoA = holo-[citrate lyase ACP] + diphosphate. It carries out the reaction 3'-dephospho-CoA + ATP = 2'-(5''-triphospho-alpha-D-ribosyl)-3'-dephospho-CoA + adenine. Bifunctional enzyme that catalyzes formation of 2-(5''-triphosphoribosyl)-3'-dephosphocoenzyme-A, and then the transfer of this prosthetic group precursor to the apo-acyl carrier protein (gamma chain) of the citrate lyase to yield the holo-acyl carrier protein. This Leuconostoc mesenteroides subsp. cremoris protein is Protein CitXG (citXG).